The primary structure comprises 521 residues: Hyccin (521 aa).

Thr306 bears the Phosphothreonine mark. The residue at position 321 (Ser321) is a Phosphoserine. The segment covering Ala355–Asn373 has biased composition (low complexity). The disordered stretch occupies residues Ala355–Ala413. Basic and acidic residues predominate over residues Gly390 to Ala406. Phosphoserine occurs at positions 415, 422, 433, 453, and 465.

It belongs to the Hyccin family. As to quaternary structure, component of a phosphatidylinositol 4-kinase (PI4K) complex, composed of PI4KA, EFR3 (EFR3A or EFR3B), TTC7 (TTC7A or TTC7B) and HYCC (HYCC1 or HYCC2). Interacts with TTC7 (TTC7A or TTC7B), interaction is direct. In terms of tissue distribution, predominantly expressed in the central nervous system, where it is found in neurons but not in myelinating cells. Lower abundance is observed in peripheral neurons, where it is detectable only at early postnatal ages. Expressed in both oligodendrocytes and neurons.

The protein localises to the cytoplasm. It is found in the cytosol. It localises to the cell membrane. Its function is as follows. Component of a complex required to localize phosphatidylinositol 4-kinase (PI4K) to the plasma membrane. The complex acts as a regulator of phosphatidylinositol 4-phosphate (PtdIns(4)P) synthesis. HYCC1 plays a key role in oligodendrocytes formation, a cell type with expanded plasma membrane that requires generation of PtdIns(4)P. Its role in oligodendrocytes formation probably explains its importance in myelination of the central and peripheral nervous system. May also have a role in the beta-catenin/Lef signaling pathway. This is Hyccin (Hycc1) from Mus musculus (Mouse).